The chain runs to 298 residues: Max-like protein X (298 aa).

The interval 1-63 is disordered; it reads MTEPGASPED…ARGCREDSSH (63 aa). Serine 7 carries the post-translational modification Phosphoserine. Residues 28-37 are compositionally biased toward basic residues; the sequence is GRARARRGSG. A phosphoserine mark is found at serine 45, serine 48, serine 74, serine 77, and serine 98. Over residues 98–109 the composition is skewed to polar residues; it reads SIGSTSASSVPN. Residues 98 to 119 form a disordered region; sequence SIGSTSASSVPNTDDEDSDYQQ. The bHLH domain maps to 129–187; sequence RRRRAHTQAEQKRRDAIKRGYDDLQTIVPTCQQQDFSIGSQKLSKAIVLQKTIDYIQFL. The tract at residues 194–214 is leucine-zipper; the sequence is QEEEVSTLRKDVTALKIMKVN.

As to quaternary structure, efficient DNA binding requires dimerization with another bHLH protein. Binds DNA as a heterodimer with MAD1, MAD4, MNT, WBSCR14 and MLXIP. Can also bind DNA as a homodimer. As to expression, expressed in all tissues examined: stomach, duodenum, jejunum, ileum, colon, liver, pancreas, salivary gland, kidney, spleen, lung, heart, skeletal muscle, brain, ovary and testis.

It is found in the cytoplasm. The protein resides in the nucleus. Its function is as follows. Transcription regulator. Forms a sequence-specific DNA-binding protein complex with MAD1, MAD4, MNT, WBSCR14 and MLXIP which recognizes the core sequence 5'-CACGTG-3'. The TCFL4-MAD1, TCFL4-MAD4, TCFL4-WBSCR14 complexes are transcriptional repressors. Plays a role in transcriptional activation of glycolytic target genes. Involved in glucose-responsive gene regulation. The chain is Max-like protein X (Mlx) from Mus musculus (Mouse).